Here is a 204-residue protein sequence, read N- to C-terminus: Urease accessory protein UreG (204 aa).

11–18 (GPVGAGKT) lines the GTP pocket.

The protein belongs to the SIMIBI class G3E GTPase family. UreG subfamily. As to quaternary structure, homodimer. UreD, UreF and UreG form a complex that acts as a GTP-hydrolysis-dependent molecular chaperone, activating the urease apoprotein by helping to assemble the nickel containing metallocenter of UreC. The UreE protein probably delivers the nickel.

The protein resides in the cytoplasm. Its function is as follows. Facilitates the functional incorporation of the urease nickel metallocenter. This process requires GTP hydrolysis, probably effectuated by UreG. The sequence is that of Urease accessory protein UreG from Staphylococcus saprophyticus subsp. saprophyticus (strain ATCC 15305 / DSM 20229 / NCIMB 8711 / NCTC 7292 / S-41).